We begin with the raw amino-acid sequence, 173 residues long: Superoxide dismutase [Cu-Zn] (173 aa).

The N-terminal stretch at 1–19 (MKRFSLAILALVVATGAQA) is a signal peptide. Residues histidine 67, histidine 69, and histidine 92 each coordinate Cu cation. The interval 72-113 (GSCQPATKDGKASAAESAGGHLDPQNTGKHEGPEGAGHLGDL) is disordered. Cysteines 74 and 169 form a disulfide. Positions 92, 101, 109, and 112 each coordinate Zn(2+). Histidine 147 serves as a coordination point for Cu cation.

Belongs to the Cu-Zn superoxide dismutase family. As to quaternary structure, monomer. Cu cation is required as a cofactor. It depends on Zn(2+) as a cofactor.

The protein resides in the periplasm. It carries out the reaction 2 superoxide + 2 H(+) = H2O2 + O2. Destroys radicals which are normally produced within the cells and which are toxic to biological systems. The chain is Superoxide dismutase [Cu-Zn] (sodC) from Escherichia coli O157:H7.